A 469-amino-acid polypeptide reads, in one-letter code: Programmed cell death protein 4 (469 aa).

The residue at position 1 (Met-1) is an N-acetylmethionine. Residues 1–23 show a composition bias toward polar residues; that stretch reads MDIENEQTLNVNPTDPDNLSDSL. 2 disordered regions span residues 1-37 and 58-128; these read MDIE…EEIK and KAKR…GTPG. Ser-25 is modified (phosphoserine). The short motif at 58-64 is the Nuclear localization signal element; that stretch reads KAKRRLR. Phosphoserine; by PKB and RPS6KB1 is present on Ser-67. Residues Ser-68, Ser-71, Ser-76, Ser-78, and Ser-94 each carry the phosphoserine modification. The Phosphodegron signature appears at 70–76; sequence DSGRGDS. The span at 114–125 shows a compositional bias: gly residues; sequence KKGGAGGKGVWG. At Tyr-152 the chain carries Phosphotyrosine. Residues 163–284 form the MI 1 domain; sequence AFEKTLTPII…CNTYIDSYKG (122 aa). 2 positions are modified to phosphoserine: Ser-313 and Ser-317. Residues 326–449 enclose the MI 2 domain; it reads HLVKEIDMLL…SKQLRDLCPS (124 aa). Residues 448 to 454 carry the Nuclear localization signal motif; the sequence is PSRGRKR. At Ser-457 the chain carries Phosphoserine; by PKB.

It belongs to the PDCD4 family. As to quaternary structure, interacts (via MI domains) with EIF4A1 and EIF4A2 (via N-terminal domain). Heterotrimer with EIF4A1; one molecule of PDCD4 binds two molecules of EIF4A1. Interacts with EIF4G1. May form a complex with EIF4A1 and EIF4G1. The interaction between PDCD4 and EIF4A1 interferes with the interaction between EIF4A1 and EIF4G. When phosphorylated, interacts with BTRC and FBXW11. Polyubiquitinated, leading to its proteasomal degradation. Rapidly degraded in response to mitogens. Phosphorylation of the phosphodegron promotes interaction with BTRC and proteasomal degradation. In terms of processing, phosphorylated at Ser-67 by RPS6KB1 in response to mitogens; phosphorylation promotes proteasomal degradation of PDCD4. In terms of tissue distribution, expressed ubiquitously. Highyly expressed in thymus and liver. Moderately expressed in brain, kidney and spleen; weakly in lung and heart. Expression is up- or down-regulated in response to apoptosis inducers. Regulated by many programmed cell death-inducing stimuli.

It localises to the nucleus. The protein resides in the cytoplasm. In terms of biological role, inhibits translation initiation and cap-dependent translation. May excert its function by hindering the interaction between EIF4A1 and EIF4G. Inhibits the helicase activity of EIF4A. Modulates the activation of JUN kinase. Down-regulates the expression of MAP4K1, thus inhibiting events important in driving invasion, namely, MAPK85 activation and consequent JUN-dependent transcription. May play a role in apoptosis. Tumor suppressor. Inhibits tumor promoter-induced neoplastic transformation. Binds RNA. This Mus musculus (Mouse) protein is Programmed cell death protein 4 (Pdcd4).